The sequence spans 270 residues: MELPNIMHPVAKLSTALAAALMLSGCMPGEIRPTIGQQMETGDQRFGDLVFRQLAPNVWQHTSYLDMPGFGAVASNGLIVRDGGRVLVVDTAWTDDQTAQILNWIKQEINLPVALAVVTHAHQDKMGGMDALHAAGIATYANALSNQLAPQEGMVAAQHSLTFAANGWVEPATAPNFGPLKVFYPGPGHTSDNITVGIDGTDIAFGGCLIKDSKAKSLGNLGDADTEHYAASARAFGAAFPKASMIVMSHSAPDSRAAITHTARMADKLR.

The first 28 residues, 1–28 (MELPNIMHPVAKLSTALAAALMLSGCMP), serve as a signal peptide directing secretion. 5 residues coordinate Zn(2+): histidine 120, histidine 122, aspartate 124, histidine 189, and cysteine 208. Positions 211 and 220 each coordinate substrate. Histidine 250 lines the Zn(2+) pocket.

It belongs to the metallo-beta-lactamase superfamily. Class-B beta-lactamase family. In terms of assembly, monomer. It depends on Zn(2+) as a cofactor.

Its subcellular location is the periplasm. It catalyses the reaction a beta-lactam + H2O = a substituted beta-amino acid. Its activity is regulated as follows. Inhibits by captopril, thiorphan, dimercaprol and tiopronin. This enzyme is not susceptible to inactivation by the beta-lactamase-blocking agents clavulanic acid. Its function is as follows. Confers resistance to the different beta-lactams antibiotics (penicillin, cephalosporin and carbapenem) via the hydrolysis of the beta-lactam ring. Does not confer resistance to the polymixin colistin or the fluoroquinolone ciprofloxacin. The protein is Metallo-beta-lactamase type 2 of Klebsiella pneumoniae.